Consider the following 307-residue polypeptide: Elongation factor Ts (307 aa).

The interval 80–83 is involved in Mg(2+) ion dislocation from EF-Tu; it reads TDFV.

It belongs to the EF-Ts family.

Its subcellular location is the cytoplasm. Functionally, associates with the EF-Tu.GDP complex and induces the exchange of GDP to GTP. It remains bound to the aminoacyl-tRNA.EF-Tu.GTP complex up to the GTP hydrolysis stage on the ribosome. The sequence is that of Elongation factor Ts (tsf) from Zymomonas mobilis subsp. mobilis (strain ATCC 31821 / ZM4 / CP4).